The primary structure comprises 84 residues: Translation initiation factor IF-1, chloroplastic (84 aa).

Residues 1-72 (MKKQNLVEME…SKGRITYRLR (72 aa)) form the S1-like domain.

It belongs to the IF-1 family. In terms of assembly, component of the 30S ribosomal translation pre-initiation complex which assembles on the 30S ribosome in the order IF-2 and IF-3, IF-1 and N-formylmethionyl-tRNA(fMet); mRNA recruitment can occur at any time during PIC assembly.

The protein localises to the plastid. It localises to the chloroplast. Functionally, one of the essential components for the initiation of protein synthesis. Stabilizes the binding of IF-2 and IF-3 on the 30S subunit to which N-formylmethionyl-tRNA(fMet) subsequently binds. Helps modulate mRNA selection, yielding the 30S pre-initiation complex (PIC). Upon addition of the 50S ribosomal subunit IF-1, IF-2 and IF-3 are released leaving the mature 70S translation initiation complex. The protein is Translation initiation factor IF-1, chloroplastic of Spirogyra maxima (Green alga).